Here is a 298-residue protein sequence, read N- to C-terminus: Inosose dehydratase (298 aa).

This sequence belongs to the IolE/MocC family. Requires glutathione as cofactor. Co(2+) is required as a cofactor. It depends on Mn(2+) as a cofactor.

It carries out the reaction scyllo-inosose = 3D-3,5/4-trihydroxycyclohexane-1,2-dione + H2O. It functions in the pathway polyol metabolism; myo-inositol degradation into acetyl-CoA; acetyl-CoA from myo-inositol: step 2/7. Catalyzes the dehydration of inosose (2-keto-myo-inositol, 2KMI or 2,4,6/3,5-pentahydroxycyclohexanone) to 3D-(3,5/4)-trihydroxycyclohexane-1,2-dione (D-2,3-diketo-4-deoxy-epi-inositol). The chain is Inosose dehydratase from Clostridium tetani (strain Massachusetts / E88).